A 413-amino-acid polypeptide reads, in one-letter code: Probable tRNA pseudouridine synthase D (413 aa).

The active-site Nucleophile is the aspartate 97. Residues 167-370 (AAPNYYGYQR…YGTYRRVRLE (204 aa)) form the TRUD domain.

It belongs to the pseudouridine synthase TruD family.

It carries out the reaction uridine(13) in tRNA = pseudouridine(13) in tRNA. Could be responsible for synthesis of pseudouridine from uracil-13 in transfer RNAs. This is Probable tRNA pseudouridine synthase D from Pyrobaculum aerophilum (strain ATCC 51768 / DSM 7523 / JCM 9630 / CIP 104966 / NBRC 100827 / IM2).